A 212-amino-acid polypeptide reads, in one-letter code: Adapter protein MecA 2 (212 aa).

Belongs to the MecA family. Homodimer.

In terms of biological role, enables the recognition and targeting of unfolded and aggregated proteins to the ClpC protease or to other proteins involved in proteolysis. Acts negatively in the development of competence by binding ComK and recruiting it to the ClpCP protease. When overexpressed, inhibits sporulation. Also involved in Spx degradation by ClpC. This Halalkalibacterium halodurans (strain ATCC BAA-125 / DSM 18197 / FERM 7344 / JCM 9153 / C-125) (Bacillus halodurans) protein is Adapter protein MecA 2 (mecA2).